A 654-amino-acid chain; its full sequence is Import motor subunit, mitochondrial (654 aa).

The transit peptide at 1–23 (MLAAKNILNRSSLSSSFRIATRL) directs the protein to the mitochondrion. Phosphothreonine is present on T330. The interval 629–654 (EQLYKNDSNNNNNNNGNNAESGETKQ) is disordered. Residues 637–646 (NNNNNNNGNN) show a composition bias toward low complexity.

It belongs to the heat shock protein 70 family. In terms of assembly, component of the PAM complex, at least composed of SSC1 (mtHsp70), MGE1, TIM44, PAM16/TIM16, PAM17 and PAM18/TIM14. In the complex, SSC1 interacts directly with PAM18 and TIM44. Interacts with NAP1.

The protein resides in the mitochondrion matrix. The enzyme catalyses ATP + H2O = ADP + phosphate + H(+). Essential component of the PAM complex, a complex required for the translocation of transit peptide-containing proteins from the inner membrane into the mitochondrial matrix in an ATP-dependent manner. Constitutes the ATP-driven core of the motor and binds the precursor preprotein. Required for the import of the processed frataxin homolog YFH1 into the mitochondrion. This is Import motor subunit, mitochondrial from Saccharomyces cerevisiae (strain ATCC 204508 / S288c) (Baker's yeast).